A 297-amino-acid chain; its full sequence is Bifonsecin B biosynthesis cluster protein A (297 aa).

The first 20 residues, 1–20 (MHFWWTAISAGLLCLPQALG), serve as a signal peptide directing secretion. N-linked (GlcNAc...) asparagine glycans are attached at residues Asn26, Asn56, Asn75, Asn124, Asn175, Asn210, and Asn280.

Belongs to the bfoA family.

Part of the gene cluster that mediates the biosynthesis of bifonsecin B, a dimeric gamma-naphthopyrone. The first step in the biosynthesis of bifonsecin B is the production of gamma-naphthopyrone precursor YWA1 by the non-reducing polyketide synthase albA, via condensation of one acetyl-CoA starter unit with 6 malonyl-CoA units. YWA1 is then methylated by bfoE at position C-6 to yield foncesin which is further methylated at position C-8 by bfoD to produce fonsecin B. A key enzyme in the biosynthetic pathway is the cytochrome P450 monooxygenase bfoB which catalyzes the oxidative dimerization of fonsecin B to bifonsecin B. Bfob also catalyzes the oxidative dimerization of rubrofusarin B into nigerone. The stereoselectivity of bfoB is influenced by the two natural monomeric substrates; homodimerization of fonsecin B yields a stereochemically pure biaryl, M-foncerine B, while rubrofusarin B yields a mixture of enantiomers M- and P-nigerone. The function of bfoA within the bifonsecin B biosynthesis pathway has not been determined yet. The polypeptide is Bifonsecin B biosynthesis cluster protein A (Aspergillus brasiliensis (strain CBS 101740 / IMI 381727 / IBT 21946)).